Reading from the N-terminus, the 316-residue chain is MSDISKASLPKAIFLMGPTASGKTALAIELRKILPVELISVDSALIYKGMDIGTAKPNAEELLAAPHRLLNIRDPSQAYSAADFRRDALAEMADITAAGRIPLLVGGTMLYFKALLEGLSPLPSADPEVRARIEQQAAEQGWESLHRQLQEVDPVAAARIHPNDPQRLSRALEVFFISGKTLTELTQTSGDALPYQVHQFAIAPASRELLHQRIEQRFHQMLASGFEAEVRALFARGDLHTDLPSIRCVGYRQMWSYLEGEISYDEMVYRGVCATRQLAKRQITWLRGWEGVHWLDSEKPEQARDEVLQVVGAIAG.

17–24 (GPTASGKT) provides a ligand contact to ATP. Substrate is bound at residue 19–24 (TASGKT). Interaction with substrate tRNA regions lie at residues 42–45 (DSAL), 166–170 (QRLSR), 247–252 (RCVGYR), and 280–287 (KRQITWLR).

This sequence belongs to the IPP transferase family. Monomer. Mg(2+) is required as a cofactor.

It catalyses the reaction adenosine(37) in tRNA + dimethylallyl diphosphate = N(6)-dimethylallyladenosine(37) in tRNA + diphosphate. Functionally, catalyzes the transfer of a dimethylallyl group onto the adenine at position 37 in tRNAs that read codons beginning with uridine, leading to the formation of N6-(dimethylallyl)adenosine (i(6)A). The sequence is that of tRNA dimethylallyltransferase from Escherichia coli O45:K1 (strain S88 / ExPEC).